The following is a 339-amino-acid chain: Putative phosphate acyltransferase (339 aa).

It belongs to the PlsX family. In terms of assembly, homodimer. Probably interacts with PlsY.

It localises to the cytoplasm. It catalyses the reaction a fatty acyl-[ACP] + phosphate = an acyl phosphate + holo-[ACP]. It participates in lipid metabolism; phospholipid metabolism. Functionally, catalyzes the reversible formation of acyl-phosphate (acyl-PO(4)) from acyl-[acyl-carrier-protein] (acyl-ACP). This enzyme utilizes acyl-ACP as fatty acyl donor, but not acyl-CoA. The polypeptide is Putative phosphate acyltransferase (Clostridium perfringens (strain 13 / Type A)).